Reading from the N-terminus, the 301-residue chain is Probable alpha-L-glutamate ligase (301 aa).

One can recognise an ATP-grasp domain in the interval 104–287 (LQFLSRKGID…IAGMIIEFIE (184 aa)). ATP contacts are provided by residues Lys-141, 178–179 (EF), Asp-187, and 211–213 (RSN). Residues Asp-248, Glu-260, and Asn-262 each coordinate Mg(2+). Mn(2+)-binding residues include Asp-248, Glu-260, and Asn-262.

It belongs to the RimK family. The cofactor is Mg(2+). Requires Mn(2+) as cofactor.

This is Probable alpha-L-glutamate ligase from Coxiella burnetii (strain CbuK_Q154) (Coxiella burnetii (strain Q154)).